A 206-amino-acid chain; its full sequence is Non-structural protein 7b (206 aa).

Residues 1–17 form the signal peptide; it reads MIVVILVCIFLANGIKA.

The polypeptide is Non-structural protein 7b (Feline coronavirus (strain FIPV WSU-79/1146) (FCoV)).